The chain runs to 355 residues: Biotin synthase (355 aa).

Residues Asn51–Ala275 form the Radical SAM core domain. [4Fe-4S] cluster is bound by residues Cys66, Cys70, and Cys73. The [2Fe-2S] cluster site is built by Cys110, Cys143, Cys203, and Arg273.

The protein belongs to the radical SAM superfamily. Biotin synthase family. Homodimer. Requires [4Fe-4S] cluster as cofactor. The cofactor is [2Fe-2S] cluster.

It carries out the reaction (4R,5S)-dethiobiotin + (sulfur carrier)-SH + 2 reduced [2Fe-2S]-[ferredoxin] + 2 S-adenosyl-L-methionine = (sulfur carrier)-H + biotin + 2 5'-deoxyadenosine + 2 L-methionine + 2 oxidized [2Fe-2S]-[ferredoxin]. It participates in cofactor biosynthesis; biotin biosynthesis; biotin from 7,8-diaminononanoate: step 2/2. Its function is as follows. Catalyzes the conversion of dethiobiotin (DTB) to biotin by the insertion of a sulfur atom into dethiobiotin via a radical-based mechanism. This is Biotin synthase from Saccharopolyspora erythraea (strain ATCC 11635 / DSM 40517 / JCM 4748 / NBRC 13426 / NCIMB 8594 / NRRL 2338).